A 96-amino-acid chain; its full sequence is Protein RnfH (96 aa).

The protein belongs to the UPF0125 (RnfH) family.

The protein is Protein RnfH of Escherichia coli O139:H28 (strain E24377A / ETEC).